The following is a 397-amino-acid chain: Serine protease MT3772 (397 aa).

4 consecutive transmembrane segments (helical) span residues 9-29 (IAVL…GALG), 32-52 (LSFG…PHIV), 62-82 (LFAA…AGVV), and 102-122 (VIGV…LAMP). Cysteines 214 and 395 form a disulfide. The active-site Proton acceptor is the His235. Asp264 is an active-site residue. The active-site Charge relay system is the Ser343.

It belongs to the peptidase S1C family. In terms of assembly, monomer.

It is found in the membrane. Its function is as follows. Required for M.tuberculosis resistance to oxidative stress in addition to its role in resistance to acid, which is essential for virulence. The chain is Serine protease MT3772 from Mycobacterium tuberculosis (strain CDC 1551 / Oshkosh).